The following is a 69-amino-acid chain: Conotoxin reg3.6 (69 aa).

The N-terminal stretch at methionine 1–alanine 20 is a signal peptide. Positions leucine 21–arginine 52 are excised as a propeptide. Intrachain disulfides connect cysteine 54–cysteine 68, cysteine 55–cysteine 66, and cysteine 60–cysteine 69.

It belongs to the conotoxin M superfamily. As to expression, expressed by the venom duct.

Its subcellular location is the secreted. The protein is Conotoxin reg3.6 of Conus regius (Crown cone).